We begin with the raw amino-acid sequence, 316 residues long: Transaldolase (316 aa).

The Schiff-base intermediate with substrate role is filled by K132.

This sequence belongs to the transaldolase family. Type 1 subfamily. As to quaternary structure, homodimer.

The protein resides in the cytoplasm. The enzyme catalyses D-sedoheptulose 7-phosphate + D-glyceraldehyde 3-phosphate = D-erythrose 4-phosphate + beta-D-fructose 6-phosphate. The protein operates within carbohydrate degradation; pentose phosphate pathway; D-glyceraldehyde 3-phosphate and beta-D-fructose 6-phosphate from D-ribose 5-phosphate and D-xylulose 5-phosphate (non-oxidative stage): step 2/3. Transaldolase is important for the balance of metabolites in the pentose-phosphate pathway. The sequence is that of Transaldolase from Vibrio vulnificus (strain YJ016).